Here is an 87-residue protein sequence, read N- to C-terminus: Small ribosomal subunit protein bS20 (87 aa).

The tract at residues 1–26 (MANIKSAKKRAIQSEKARKHNASRRS) is disordered.

The protein belongs to the bacterial ribosomal protein bS20 family.

Binds directly to 16S ribosomal RNA. The sequence is that of Small ribosomal subunit protein bS20 from Escherichia coli O17:K52:H18 (strain UMN026 / ExPEC).